The sequence spans 395 residues: Tyrosine--tRNA ligase (395 aa).

The 'HIGH' region signature appears at 42–51 (PTAPDIHLGH). The 'KMSKS' region signature appears at 226 to 230 (KMSKS). Lys-229 lines the ATP pocket. Residues 334–394 (IGLANLLKEA…GKRKFARVTV (61 aa)) enclose the S4 RNA-binding domain.

The protein belongs to the class-I aminoacyl-tRNA synthetase family. TyrS type 2 subfamily. In terms of assembly, homodimer.

It is found in the cytoplasm. The catalysed reaction is tRNA(Tyr) + L-tyrosine + ATP = L-tyrosyl-tRNA(Tyr) + AMP + diphosphate + H(+). Its function is as follows. Catalyzes the attachment of tyrosine to tRNA(Tyr) in a two-step reaction: tyrosine is first activated by ATP to form Tyr-AMP and then transferred to the acceptor end of tRNA(Tyr). In Mannheimia succiniciproducens (strain KCTC 0769BP / MBEL55E), this protein is Tyrosine--tRNA ligase.